The following is a 1047-amino-acid chain: Isoleucine--tRNA ligase (1047 aa).

The short motif at 52–62 (PTANGMPGAHH) is the 'HIGH' region element. The short motif at 600–604 (KMSKH) is the 'KMSKS' region element. Residue Lys-603 participates in ATP binding.

This sequence belongs to the class-I aminoacyl-tRNA synthetase family. IleS type 2 subfamily. As to quaternary structure, monomer. Zn(2+) serves as cofactor.

It is found in the cytoplasm. It catalyses the reaction tRNA(Ile) + L-isoleucine + ATP = L-isoleucyl-tRNA(Ile) + AMP + diphosphate. Catalyzes the attachment of isoleucine to tRNA(Ile). As IleRS can inadvertently accommodate and process structurally similar amino acids such as valine, to avoid such errors it has two additional distinct tRNA(Ile)-dependent editing activities. One activity is designated as 'pretransfer' editing and involves the hydrolysis of activated Val-AMP. The other activity is designated 'posttransfer' editing and involves deacylation of mischarged Val-tRNA(Ile). In Streptomyces coelicolor (strain ATCC BAA-471 / A3(2) / M145), this protein is Isoleucine--tRNA ligase.